The sequence spans 881 residues: Nitrate reductase [NADH] 1 (881 aa).

Residues 1-46 (MAASVEHRPFTSHQHGVVRSFKSYPDVPRPKKLPLPQPLSDSTNDN) form a disordered region. Cys167 contributes to the Mo-molybdopterin binding site. The region spanning 515–590 (TKSYSLSEVR…LEDYRIGELM (76 aa)) is the Cytochrome b5 heme-binding domain. His550 and His573 together coordinate heme. The FAD-binding FR-type domain maps to 625–737 (REKIPCKLLS…KGPLGHIEYT (113 aa)). FAD contacts are provided by residues 677 to 680 (RAYT), 694 to 698 (VVKVY), Phe699, Phe706, 711 to 713 (IMS), and Thr764.

Belongs to the nitrate reductase family. As to quaternary structure, homodimer. It depends on FAD as a cofactor. Heme serves as cofactor. Requires Mo-molybdopterin as cofactor.

The catalysed reaction is nitrite + NAD(+) + H2O = nitrate + NADH + H(+). Its function is as follows. Nitrate reductase is a key enzyme involved in the first step of nitrate assimilation in plants, fungi and bacteria. This is Nitrate reductase [NADH] 1 (NIA1) from Phaseolus vulgaris (Kidney bean).